A 576-amino-acid chain; its full sequence is Proline--tRNA ligase (576 aa).

The protein belongs to the class-II aminoacyl-tRNA synthetase family. ProS type 1 subfamily. Homodimer.

It is found in the cytoplasm. The enzyme catalyses tRNA(Pro) + L-proline + ATP = L-prolyl-tRNA(Pro) + AMP + diphosphate. In terms of biological role, catalyzes the attachment of proline to tRNA(Pro) in a two-step reaction: proline is first activated by ATP to form Pro-AMP and then transferred to the acceptor end of tRNA(Pro). As ProRS can inadvertently accommodate and process non-cognate amino acids such as alanine and cysteine, to avoid such errors it has two additional distinct editing activities against alanine. One activity is designated as 'pretransfer' editing and involves the tRNA(Pro)-independent hydrolysis of activated Ala-AMP. The other activity is designated 'posttransfer' editing and involves deacylation of mischarged Ala-tRNA(Pro). The misacylated Cys-tRNA(Pro) is not edited by ProRS. The protein is Proline--tRNA ligase of Psychrobacter sp. (strain PRwf-1).